A 385-amino-acid polypeptide reads, in one-letter code: uncharacterized protein (385 aa).

The residue at position 194 (K194) is an N6-(pyridoxal phosphate)lysine.

Belongs to the class-V pyridoxal-phosphate-dependent aminotransferase family. The cofactor is pyridoxal 5'-phosphate.

This is an uncharacterized protein from Methanocaldococcus jannaschii (strain ATCC 43067 / DSM 2661 / JAL-1 / JCM 10045 / NBRC 100440) (Methanococcus jannaschii).